Here is a 561-residue protein sequence, read N- to C-terminus: Methionine--tRNA ligase (561 aa).

The short motif at 11–21 is the 'HIGH' region element; that stretch reads PYVNTVPHLGN. Positions 143, 146, 156, and 159 each coordinate Zn(2+). Residue Lys-334 coordinates ATP.

This sequence belongs to the class-I aminoacyl-tRNA synthetase family. MetG type 1 subfamily. Zn(2+) serves as cofactor.

Its subcellular location is the cytoplasm. The catalysed reaction is tRNA(Met) + L-methionine + ATP = L-methionyl-tRNA(Met) + AMP + diphosphate. Functionally, is required not only for elongation of protein synthesis but also for the initiation of all mRNA translation through initiator tRNA(fMet) aminoacylation. In Ignicoccus hospitalis (strain KIN4/I / DSM 18386 / JCM 14125), this protein is Methionine--tRNA ligase.